Reading from the N-terminus, the 388-residue chain is Mannosyl-3-phosphoglycerate synthase (388 aa).

The protein belongs to the glycosyltransferase 2 family.

The protein localises to the cytoplasm. It catalyses the reaction (2R)-3-phosphoglycerate + GDP-alpha-D-mannose = 2-O-(alpha-D-mannosyl)-3-phosphoglycerate + GDP + H(+). It functions in the pathway carbohydrate biosynthesis; 2-(alpha-D-mannosyl)-D-glycerate biosynthesis; 2-(alpha-D-mannosyl)-D-glycerate from GDP-alpha-D-mannose (MPG route): step 1/2. Functionally, transfers a mannosyl group from GDP-mannose to phosphoglycerate to form mannosyl-3-phosphoglycerate (MPG). The sequence is that of Mannosyl-3-phosphoglycerate synthase (mngA) from Aeropyrum pernix (strain ATCC 700893 / DSM 11879 / JCM 9820 / NBRC 100138 / K1).